An 87-amino-acid polypeptide reads, in one-letter code: MASKDFHIVAETGIHARPATLLVQTASKFASDITLDYKGKAVNLKSIMGVMSLGVGQGADVTISAEGADADDAIVAIAETMTKEGLA.

Residues 1–87 enclose the HPr domain; it reads MASKDFHIVA…AETMTKEGLA (87 aa). His15 functions as the Pros-phosphohistidine intermediate in the catalytic mechanism. Ser46 is modified (phosphoserine; by HPrK/P).

It belongs to the HPr family.

It is found in the cytoplasm. Its activity is regulated as follows. Phosphorylation on Ser-46 inhibits the phosphoryl transfer from enzyme I to HPr. Its function is as follows. General (non sugar-specific) component of the phosphoenolpyruvate-dependent sugar phosphotransferase system (sugar PTS). This major carbohydrate active-transport system catalyzes the phosphorylation of incoming sugar substrates concomitantly with their translocation across the cell membrane. The phosphoryl group from phosphoenolpyruvate (PEP) is transferred to the phosphoryl carrier protein HPr by enzyme I. Phospho-HPr then transfers it to the PTS EIIA domain. Functionally, P-Ser-HPr interacts with the catabolite control protein A (CcpA), forming a complex that binds to DNA at the catabolite response elements cre, operator sites preceding a large number of catabolite-regulated genes. Thus, P-Ser-HPr is a corepressor in carbon catabolite repression (CCR), a mechanism that allows bacteria to coordinate and optimize the utilization of available carbon sources. P-Ser-HPr also plays a role in inducer exclusion, in which it probably interacts with several non-PTS permeases and inhibits their transport activity. This chain is Phosphocarrier protein HPr (ptsH), found in Streptococcus salivarius.